We begin with the raw amino-acid sequence, 369 residues long: Histidinol-phosphate aminotransferase (369 aa).

Lys-223 is subject to N6-(pyridoxal phosphate)lysine.

The protein belongs to the class-II pyridoxal-phosphate-dependent aminotransferase family. Histidinol-phosphate aminotransferase subfamily. Homodimer. It depends on pyridoxal 5'-phosphate as a cofactor.

It catalyses the reaction L-histidinol phosphate + 2-oxoglutarate = 3-(imidazol-4-yl)-2-oxopropyl phosphate + L-glutamate. It functions in the pathway amino-acid biosynthesis; L-histidine biosynthesis; L-histidine from 5-phospho-alpha-D-ribose 1-diphosphate: step 7/9. This is Histidinol-phosphate aminotransferase from Shouchella clausii (strain KSM-K16) (Alkalihalobacillus clausii).